Consider the following 136-residue polypeptide: uncharacterized protein (136 aa).

Its subcellular location is the mitochondrion. This is an uncharacterized protein from Arabidopsis thaliana (Mouse-ear cress).